Consider the following 285-residue polypeptide: Putative sugar uptake protein lin0444 (285 aa).

The next 9 membrane-spanning stretches (helical) occupy residues 2–21 (SIYL…PIIA), 31–50 (QLLG…FWIL), 55–77 (TVLS…LLQF), 111–133 (WQTV…GVVM), 146–168 (SVSF…YVVT), 172–194 (FDVT…AIGI), 207–229 (VTFN…LATA), 233–255 (VATS…ILIF), and 262–284 (LEWT…LSLL).

The protein belongs to the GRP transporter (TC 2.A.7.5) family.

The protein resides in the cell membrane. The sequence is that of Putative sugar uptake protein lin0444 from Listeria innocua serovar 6a (strain ATCC BAA-680 / CLIP 11262).